Consider the following 171-residue polypeptide: MNHEHPDIESQQSAADAAAAAGVNDEVERLRAELDQVKADVLRERADLENQRKRVARDIEQARKFANEKLLGELLPVFDSLDAGLKAAGDDAHPLREGLELTYRQLLKVAGDNGLVLLDPTGQPFNPEHHQAISQVPTPGAAPGSVVTVFQKGYLLNERLLRPALVVVAAD.

The interval 1–22 (MNHEHPDIESQQSAADAAAAAG) is disordered.

This sequence belongs to the GrpE family. Homodimer.

Its subcellular location is the cytoplasm. Functionally, participates actively in the response to hyperosmotic and heat shock by preventing the aggregation of stress-denatured proteins, in association with DnaK and GrpE. It is the nucleotide exchange factor for DnaK and may function as a thermosensor. Unfolded proteins bind initially to DnaJ; upon interaction with the DnaJ-bound protein, DnaK hydrolyzes its bound ATP, resulting in the formation of a stable complex. GrpE releases ADP from DnaK; ATP binding to DnaK triggers the release of the substrate protein, thus completing the reaction cycle. Several rounds of ATP-dependent interactions between DnaJ, DnaK and GrpE are required for fully efficient folding. The chain is Protein GrpE from Stenotrophomonas maltophilia (strain R551-3).